Consider the following 262-residue polypeptide: Adenosylcobinamide-GDP ribazoletransferase (262 aa).

6 consecutive transmembrane segments (helical) span residues 43-63 (YFGLVGLLVGLLSAIVFWLTQ), 66-86 (LPAGVSVLLAMLVGVLLTGGF), 120-140 (GALALMLALLLKWQLLVELAL), 146-166 (AGSALIVAHTVSRMVSASIIF), 191-211 (LLILIASGVLVLLFLKGLAAL), and 242-262 (AAQQIAEIVCYFVLLVVGNIL).

It belongs to the CobS family. The cofactor is Mg(2+).

The protein resides in the cell inner membrane. It carries out the reaction alpha-ribazole + adenosylcob(III)inamide-GDP = adenosylcob(III)alamin + GMP + H(+). It catalyses the reaction alpha-ribazole 5'-phosphate + adenosylcob(III)inamide-GDP = adenosylcob(III)alamin 5'-phosphate + GMP + H(+). The protein operates within cofactor biosynthesis; adenosylcobalamin biosynthesis; adenosylcobalamin from cob(II)yrinate a,c-diamide: step 7/7. Functionally, joins adenosylcobinamide-GDP and alpha-ribazole to generate adenosylcobalamin (Ado-cobalamin). Also synthesizes adenosylcobalamin 5'-phosphate from adenosylcobinamide-GDP and alpha-ribazole 5'-phosphate. The sequence is that of Adenosylcobinamide-GDP ribazoletransferase from Shewanella baltica (strain OS155 / ATCC BAA-1091).